The chain runs to 298 residues: Inosose dehydratase (298 aa).

The protein belongs to the IolE/MocC family. The cofactor is glutathione. It depends on Co(2+) as a cofactor. Requires Mn(2+) as cofactor.

The enzyme catalyses scyllo-inosose = 3D-3,5/4-trihydroxycyclohexane-1,2-dione + H2O. It functions in the pathway polyol metabolism; myo-inositol degradation into acetyl-CoA; acetyl-CoA from myo-inositol: step 2/7. Its function is as follows. Catalyzes the dehydration of inosose (2-keto-myo-inositol, 2KMI or 2,4,6/3,5-pentahydroxycyclohexanone) to 3D-(3,5/4)-trihydroxycyclohexane-1,2-dione (D-2,3-diketo-4-deoxy-epi-inositol). The chain is Inosose dehydratase from Clostridium botulinum (strain Alaska E43 / Type E3).